A 350-amino-acid chain; its full sequence is Chlorophyll a/b light-harvesting protein PcbA (350 aa).

6 helical membrane-spanning segments follow: residues 26–46 (LSAHIAQYALITFWAGGITLF), 62–82 (LILIPHLATLGWGIGSGGQVV), 87–107 (YFVIGVIHLVASAVFGAGALY), 214–234 (IAVVLLAGGFWHINQAPFPWA), 248–268 (LSASLAGLSMAGFAAAYFSAV), and 309–329 (LCNVHFFLAFFVLQGHLWHAL).

The protein belongs to the PsbB/PsbC family. IsiA/Pcb subfamily. The antenna complex consists of chlorophylls (a and b) and chlorophyll a/b binding proteins. Chlorophyll a serves as cofactor. Chlorophyll b is required as a cofactor.

Its subcellular location is the cellular thylakoid membrane. Functionally, the antenna complex functions as a light receptor, it captures and delivers excitation energy to photosystems II and I. The Prochlorales pcb genes are not related to higher plant LHCs. The protein is Chlorophyll a/b light-harvesting protein PcbA (pcbA) of Prochlorothrix hollandica.